The chain runs to 398 residues: Tryptophan synthase beta chain (398 aa).

Lys-90 carries the post-translational modification N6-(pyridoxal phosphate)lysine.

Belongs to the TrpB family. In terms of assembly, tetramer of two alpha and two beta chains. It depends on pyridoxal 5'-phosphate as a cofactor.

The enzyme catalyses (1S,2R)-1-C-(indol-3-yl)glycerol 3-phosphate + L-serine = D-glyceraldehyde 3-phosphate + L-tryptophan + H2O. Its pathway is amino-acid biosynthesis; L-tryptophan biosynthesis; L-tryptophan from chorismate: step 5/5. In terms of biological role, the beta subunit is responsible for the synthesis of L-tryptophan from indole and L-serine. The polypeptide is Tryptophan synthase beta chain (Anoxybacillus flavithermus (strain DSM 21510 / WK1)).